The sequence spans 307 residues: MELSEISFSIPAADDFYDDPCFSTSDMHFFEDMDPRLVHAGLLKPDDCCSSSSLSPSSSSASPSSLLHIHHHTEAEDDEHIRAPSGHHHAGRCLLWACKACKRKTTNVDRRKAATLRERRRLSKVNEAFETLKRCTNTNPNQRLPKVEILRNAISYIESLQALLRGGQDEAFYTVLEHYSGDSDASSPRSNCSDGMTDFNGPTCQSNRRGSYYSSYFSQTPKAFAPPGSAIFVPPGSVNNCSAWFCFAGSLKAERNSSLDCLSSIVERISTATSSGPPPVDGRGSPGPLQASSPRSSREPNLIYQVL.

In terms of domain architecture, bHLH spans 109–160 (DRRKAATLRERRRLSKVNEAFETLKRCTNTNPNQRLPKVEILRNAISYIESL). The interval 271–307 (TATSSGPPPVDGRGSPGPLQASSPRSSREPNLIYQVL) is disordered.

Efficient DNA binding requires dimerization with another bHLH protein. In terms of tissue distribution, expressed in fast and myotomal muscle. Very weak expression in brain, skin and gonads.

It is found in the nucleus. In terms of biological role, may act as a transcriptional activator that promotes transcription of muscle-specific target genes and plays a role in muscle differentiation. The chain is Myoblast determination protein 1 homolog (myod) from Takifugu rubripes (Japanese pufferfish).